Consider the following 615-residue polypeptide: Proteasome-associated ATPase (615 aa).

A compositionally biased stretch (basic and acidic residues) spans 1–13; the sequence is MSESQRHEAREDG. Positions 1–32 are disordered; that stretch reads MSESQRHEAREDGFTTPHESGLSSEDAAELEE. A coiled-coil region spans residues 22 to 100; the sequence is LSSEDAAELE…LREEVDRLGQ (79 aa). 302 to 307 contributes to the ATP binding site; that stretch reads GCGKTL. The interval 614-615 is docks into pockets in the proteasome alpha-ring; the sequence is YL.

The protein belongs to the AAA ATPase family. As to quaternary structure, homohexamer. Assembles into a hexameric ring structure that caps the 20S proteasome core. Strongly interacts with the prokaryotic ubiquitin-like protein Pup through a hydrophobic interface; the interacting region of ARC lies in its N-terminal coiled-coil domain. There is one Pup binding site per ARC hexamer ring. Upon ATP-binding, the C-terminus of ARC interacts with the alpha-rings of the proteasome core, possibly by binding to the intersubunit pockets.

It participates in protein degradation; proteasomal Pup-dependent pathway. In terms of biological role, ATPase which is responsible for recognizing, binding, unfolding and translocation of pupylated proteins into the bacterial 20S proteasome core particle. May be essential for opening the gate of the 20S proteasome via an interaction with its C-terminus, thereby allowing substrate entry and access to the site of proteolysis. Thus, the C-termini of the proteasomal ATPase may function like a 'key in a lock' to induce gate opening and therefore regulate proteolysis. The chain is Proteasome-associated ATPase from Mycobacterium sp. (strain JLS).